The chain runs to 136 residues: Protein PsiE homolog (136 aa).

A run of 4 helical transmembrane segments spans residues 15–35 (AMQTVLNLGLLCLGIILIVFL), 58–78 (VEGLVVYFLYFEFIALIVKYF), 83–103 (HFPLRYFVYIGITAIVRLIII), and 108–128 (PMAVLIYSAAILILVITLWLC).

It belongs to the PsiE family.

It localises to the cell inner membrane. The chain is Protein PsiE homolog from Klebsiella pneumoniae (strain 342).